A 296-amino-acid polypeptide reads, in one-letter code: Cytidine deaminase (296 aa).

2 consecutive CMP/dCMP-type deaminase domains span residues 47-167 (TEAE…FGPK) and 186-296 (DSSD…VDPV). A substrate-binding site is contributed by 88–90 (NLE). H101 lines the Zn(2+) pocket. E103 serves as the catalytic Proton donor. Positions 128 and 131 each coordinate Zn(2+).

Belongs to the cytidine and deoxycytidylate deaminase family. As to quaternary structure, homodimer. It depends on Zn(2+) as a cofactor.

It catalyses the reaction cytidine + H2O + H(+) = uridine + NH4(+). It carries out the reaction 2'-deoxycytidine + H2O + H(+) = 2'-deoxyuridine + NH4(+). This enzyme scavenges exogenous and endogenous cytidine and 2'-deoxycytidine for UMP synthesis. The protein is Cytidine deaminase of Shewanella sp. (strain MR-4).